Here is a 62-residue protein sequence, read N- to C-terminus: Probable tautomerase RSc0807 (62 aa).

Pro2 acts as the Proton acceptor; via imino nitrogen in catalysis.

It belongs to the 4-oxalocrotonate tautomerase family.

In Ralstonia nicotianae (strain ATCC BAA-1114 / GMI1000) (Ralstonia solanacearum), this protein is Probable tautomerase RSc0807.